The primary structure comprises 184 residues: Serine recombinase PinE (184 aa).

The region spanning 1–134 (MLIGYVRVST…AGLETARAQG (134 aa)) is the Resolvase/invertase-type recombinase catalytic domain. Ser-9 serves as the catalytic O-(5'-phospho-DNA)-serine intermediate. A DNA-binding region (H-T-H motif) is located at residues 161 to 180 (RQKVAIIYDVGVSTLYKRFP).

It belongs to the site-specific recombinase resolvase family.

In terms of biological role, this protein catalyzes the inversion of an 1800-bp E.coli DNA fragment, the P region, which can exist in either orientation. The function of the inversion is not yet clear. In Escherichia coli (strain K12), this protein is Serine recombinase PinE (pinE).